The following is a 399-amino-acid chain: Probable peptidoglycan glycosyltransferase FtsW (399 aa).

The next 9 helical transmembrane spans lie at 33–53 (LVWL…STSI), 71–91 (IFYF…PIIF), 98–118 (IILI…HSIH), 160–180 (FWGF…LLAE), 182–202 (DLGT…LSGA), 204–224 (IGQF…LILL), 287–307 (IIGE…IFTI), 324–344 (IFSG…TSIN), and 359–379 (LPFI…IFFL).

This sequence belongs to the SEDS family. FtsW subfamily.

It is found in the cell inner membrane. It catalyses the reaction [GlcNAc-(1-&gt;4)-Mur2Ac(oyl-L-Ala-gamma-D-Glu-L-Lys-D-Ala-D-Ala)](n)-di-trans,octa-cis-undecaprenyl diphosphate + beta-D-GlcNAc-(1-&gt;4)-Mur2Ac(oyl-L-Ala-gamma-D-Glu-L-Lys-D-Ala-D-Ala)-di-trans,octa-cis-undecaprenyl diphosphate = [GlcNAc-(1-&gt;4)-Mur2Ac(oyl-L-Ala-gamma-D-Glu-L-Lys-D-Ala-D-Ala)](n+1)-di-trans,octa-cis-undecaprenyl diphosphate + di-trans,octa-cis-undecaprenyl diphosphate + H(+). Its pathway is cell wall biogenesis; peptidoglycan biosynthesis. Functionally, peptidoglycan polymerase that is essential for cell division. The sequence is that of Probable peptidoglycan glycosyltransferase FtsW from Buchnera aphidicola subsp. Acyrthosiphon pisum (strain APS) (Acyrthosiphon pisum symbiotic bacterium).